We begin with the raw amino-acid sequence, 99 residues long: U1-theraphotoxin-Lsp1b (99 aa).

The signal sequence occupies residues 1–23; sequence MRSLTLAALLLCSLLLVFHTSAA. A propeptide spanning residues 24 to 50 is cleaved from the precursor; that stretch reads EELQAQEGHLMIPGDTDTALETVDDER. 4 disulfide bridges follow: Cys-54-Cys-67, Cys-58-Cys-91, Cys-72-Cys-74, and Cys-85-Cys-96.

The protein belongs to the neurotoxin 12 (Hwtx-2) family. 04 (lasiotoxin) subfamily. In terms of tissue distribution, expressed by the venom gland.

It is found in the secreted. In terms of biological role, toxin that causes irreversible contractile paralysis into adult Aedes aegypti resulting in 100% mortality after 24 hours. This is U1-theraphotoxin-Lsp1b from Lasiodora sp. (strain IBSP 8539) (Brazilian salmon pink birdeater).